A 260-amino-acid polypeptide reads, in one-letter code: Ribosomal RNA small subunit methyltransferase A (260 aa).

6 residues coordinate S-adenosyl-L-methionine: Asn16, Leu18, Gly43, Glu64, Asp86, and Asn108.

This sequence belongs to the class I-like SAM-binding methyltransferase superfamily. rRNA adenine N(6)-methyltransferase family. RsmA subfamily.

Its subcellular location is the cytoplasm. It carries out the reaction adenosine(1518)/adenosine(1519) in 16S rRNA + 4 S-adenosyl-L-methionine = N(6)-dimethyladenosine(1518)/N(6)-dimethyladenosine(1519) in 16S rRNA + 4 S-adenosyl-L-homocysteine + 4 H(+). Its function is as follows. Specifically dimethylates two adjacent adenosines (A1518 and A1519) in the loop of a conserved hairpin near the 3'-end of 16S rRNA in the 30S particle. May play a critical role in biogenesis of 30S subunits. The protein is Ribosomal RNA small subunit methyltransferase A of Buchnera aphidicola subsp. Baizongia pistaciae (strain Bp).